Reading from the N-terminus, the 763-residue chain is ATP-dependent RNA helicase SUPV3L1, mitochondrial (763 aa).

Residues 1 to 65 (MSVNRCIYLL…RPLDTSLFIP (65 aa)) constitute a mitochondrion transit peptide. A disordered region spans residues 39-58 (RRTFDKLSTRHSSSGSSRPL). One can recognise a Helicase ATP-binding domain in the interval 192–332 (EARAIQRKIV…AVDFITELMF (141 aa)). Residue 205–212 (GPTNSGKT) participates in ATP binding. The region spanning 354–519 (HAVESLDNLK…PTAEQIEMFA (166 aa)) is the Helicase C-terminal domain. Disordered regions lie at residues 679-721 (DSQP…KSSL) and 742-763 (EWAR…RKKK). Over residues 680–697 (SQPTDTESNSSSTVPESE) the composition is skewed to polar residues.

This sequence belongs to the helicase family. It depends on Mg(2+) as a cofactor. The cofactor is Mn(2+).

It is found in the nucleus. The protein resides in the mitochondrion matrix. It localises to the mitochondrion nucleoid. It catalyses the reaction ATP + H2O = ADP + phosphate + H(+). Functionally, major helicase player in mitochondrial RNA metabolism. Component of the mitochondrial degradosome (mtEXO) complex, that degrades 3' overhang double-stranded RNA with a 3'-to-5' directionality in an ATP-dependent manner. ATPase and ATP-dependent multisubstrate helicase, able to unwind double-stranded (ds) DNA and RNA, and RNA/DNA heteroduplexes in the 5'-to-3' direction. Plays a role in the RNA surveillance system in mitochondria; regulates the stability of mature mRNAs, the removal of aberrantly formed mRNAs and the rapid degradation of non coding processing intermediates. Also implicated in recombination and chromatin maintenance pathways. May protect cells from apoptosis. Associates with mitochondrial DNA. The chain is ATP-dependent RNA helicase SUPV3L1, mitochondrial (supv3l1) from Danio rerio (Zebrafish).